The following is a 569-amino-acid chain: Intraflagellar transport protein 74/72 (569 aa).

3 coiled-coil regions span residues 75 to 156 (ITAT…TRNE), 201 to 231 (YRSL…VAAN), and 271 to 298 (AITL…AESH).

The protein belongs to the IFT74 family.

The protein resides in the cell projection. Its subcellular location is the cilium. The protein localises to the flagellum. It localises to the cytoplasm. It is found in the cytoskeleton. The protein resides in the flagellum axoneme. Its subcellular location is the flagellum basal body. Functionally, component of the intraflagellar transport complex B (IFT-B) involved in flagellar assembly. The chain is Intraflagellar transport protein 74/72 from Giardia intestinalis (strain ATCC 50803 / WB clone C6) (Giardia lamblia).